The sequence spans 214 residues: Large ribosomal subunit protein bL25 (214 aa).

The disordered stretch occupies residues 179-214 (VPPTQGPSEAEIEEVEAGDADTPEPEVVGEKEEDEE). Acidic residues predominate over residues 188–202 (AEIEEVEAGDADTPE).

The protein belongs to the bacterial ribosomal protein bL25 family. CTC subfamily. Part of the 50S ribosomal subunit; part of the 5S rRNA/L5/L18/L25 subcomplex. Contacts the 5S rRNA. Binds to the 5S rRNA independently of L5 and L18.

Its function is as follows. This is one of the proteins that binds to the 5S RNA in the ribosome where it forms part of the central protuberance. The protein is Large ribosomal subunit protein bL25 of Staphylococcus carnosus (strain TM300).